The sequence spans 456 residues: Bifunctional protein GlmU (456 aa).

Residues 1–229 are pyrophosphorylase; that stretch reads MLNNAMSVVI…LSEVEGVNNR (229 aa). Residues 11-14, lysine 25, glutamine 76, 81-82, 103-105, glycine 140, glutamate 154, asparagine 169, and asparagine 227 each bind UDP-N-acetyl-alpha-D-glucosamine; these read LAAG, GT, and YGD. Aspartate 105 provides a ligand contact to Mg(2+). Residue asparagine 227 participates in Mg(2+) binding. Residues 230-250 are linker; sequence LQLSRLERVYQSEQAEKLLLA. Residues 251–456 are N-acetyltransferase; it reads GVMLRDPARF…EGWRRPVKKK (206 aa). UDP-N-acetyl-alpha-D-glucosamine is bound by residues arginine 333 and lysine 351. The Proton acceptor role is filled by histidine 363. Residues tyrosine 366 and asparagine 377 each contribute to the UDP-N-acetyl-alpha-D-glucosamine site. Residues alanine 380, 386 to 387, serine 405, alanine 423, and arginine 440 each bind acetyl-CoA; that span reads NY.

This sequence in the N-terminal section; belongs to the N-acetylglucosamine-1-phosphate uridyltransferase family. In the C-terminal section; belongs to the transferase hexapeptide repeat family. Homotrimer. It depends on Mg(2+) as a cofactor.

It localises to the cytoplasm. It carries out the reaction alpha-D-glucosamine 1-phosphate + acetyl-CoA = N-acetyl-alpha-D-glucosamine 1-phosphate + CoA + H(+). It catalyses the reaction N-acetyl-alpha-D-glucosamine 1-phosphate + UTP + H(+) = UDP-N-acetyl-alpha-D-glucosamine + diphosphate. Its pathway is nucleotide-sugar biosynthesis; UDP-N-acetyl-alpha-D-glucosamine biosynthesis; N-acetyl-alpha-D-glucosamine 1-phosphate from alpha-D-glucosamine 6-phosphate (route II): step 2/2. The protein operates within nucleotide-sugar biosynthesis; UDP-N-acetyl-alpha-D-glucosamine biosynthesis; UDP-N-acetyl-alpha-D-glucosamine from N-acetyl-alpha-D-glucosamine 1-phosphate: step 1/1. It functions in the pathway bacterial outer membrane biogenesis; LPS lipid A biosynthesis. Its function is as follows. Catalyzes the last two sequential reactions in the de novo biosynthetic pathway for UDP-N-acetylglucosamine (UDP-GlcNAc). The C-terminal domain catalyzes the transfer of acetyl group from acetyl coenzyme A to glucosamine-1-phosphate (GlcN-1-P) to produce N-acetylglucosamine-1-phosphate (GlcNAc-1-P), which is converted into UDP-GlcNAc by the transfer of uridine 5-monophosphate (from uridine 5-triphosphate), a reaction catalyzed by the N-terminal domain. The protein is Bifunctional protein GlmU of Shigella sonnei (strain Ss046).